A 318-amino-acid chain; its full sequence is MEGRVNALSNINDLELHNFLVDPNFDQFINLIRGDHQTIDENPVLDFDLGPLQNSPCFIDENQFIPTPVDDLFDELPDLDSNVAESFRSFDGDSVRAGGEEDEEDYNDGDDSSATTTNNDGTRKTKTDRSRTLISERRRRGRMKDKLYALRSLVPNITKMDKASIVGDAVLYVQELQSQAKKLKSDIAGLEASLNSTGGYQEHAPDAQKTQPFRGINPPASKKIIQMDVIQVEEKGFYVRLVCNKGEGVAPSLYKSLESLTSFQVQNSNLSSPSPDTYLLTYTLDGTCFEQSLNLPNLKLWITGSLLNQGFEFIKSFT.

Residues 90–138 form a disordered region; the sequence is FDGDSVRAGGEEDEEDYNDGDDSSATTTNNDGTRKTKTDRSRTLISERR. Over residues 100–111 the composition is skewed to acidic residues; it reads EEDEEDYNDGDD. Residues 121–136 show a composition bias toward basic and acidic residues; it reads GTRKTKTDRSRTLISE. The bHLH domain maps to 127-176; the sequence is TDRSRTLISERRRRGRMKDKLYALRSLVPNITKMDKASIVGDAVLYVQEL.

As to quaternary structure, homodimer. In terms of tissue distribution, expressed in roots and inflorescence, and to a lower extent, in leaves and stems. In roots, confined to the outer cell layers, specifically in the differentiation zone. Also detected in the endodermis and inner tissues of the central cylinder.

The protein resides in the nucleus. Its function is as follows. Transcription factor. Essential protein involved in iron uptake responses. Regulates FRO2 at the level of mRNA accumulation and IRT1 at the level of protein accumulation. Confers enhanced iron mobilization responses at low iron supply. The chain is Transcription factor FER-LIKE IRON DEFICIENCY-INDUCED TRANSCRIPTION FACTOR (FIT) from Arabidopsis thaliana (Mouse-ear cress).